The sequence spans 156 residues: NAD(P)H-quinone oxidoreductase subunit N (156 aa).

Belongs to the complex I NdhN subunit family. In terms of assembly, NDH-1 can be composed of about 15 different subunits; different subcomplexes with different compositions have been identified which probably have different functions.

It is found in the cellular thylakoid membrane. It catalyses the reaction a plastoquinone + NADH + (n+1) H(+)(in) = a plastoquinol + NAD(+) + n H(+)(out). The enzyme catalyses a plastoquinone + NADPH + (n+1) H(+)(in) = a plastoquinol + NADP(+) + n H(+)(out). NDH-1 shuttles electrons from an unknown electron donor, via FMN and iron-sulfur (Fe-S) centers, to quinones in the respiratory and/or the photosynthetic chain. The immediate electron acceptor for the enzyme in this species is believed to be plastoquinone. Couples the redox reaction to proton translocation, and thus conserves the redox energy in a proton gradient. Cyanobacterial NDH-1 also plays a role in inorganic carbon-concentration. The polypeptide is NAD(P)H-quinone oxidoreductase subunit N (Prochlorococcus marinus (strain MIT 9515)).